The sequence spans 452 residues: Adenylosuccinate synthetase isozyme 1 (452 aa).

A disordered region spans residues methionine 1–tyrosine 22. GTP contacts are provided by residues glycine 37–lysine 43 and glycine 65–threonine 67. The Proton acceptor role is filled by aspartate 38. 2 residues coordinate Mg(2+): aspartate 38 and glycine 65. Residue aspartate 38 participates in substrate binding. Residues aspartate 38–lysine 41, asparagine 63–histidine 66, threonine 158, arginine 172, asparagine 251, threonine 266, and arginine 330 each bind IMP. The Proton donor role is filled by histidine 66. Valine 326–arginine 332 contacts substrate. Residues arginine 332, lysine 358–aspartate 360, and glycine 440–lysine 443 each bind GTP.

This sequence belongs to the adenylosuccinate synthetase family. Homodimer. Requires Mg(2+) as cofactor.

It localises to the cytoplasm. The enzyme catalyses IMP + L-aspartate + GTP = N(6)-(1,2-dicarboxyethyl)-AMP + GDP + phosphate + 2 H(+). Its pathway is purine metabolism; AMP biosynthesis via de novo pathway; AMP from IMP: step 1/2. Component of the purine nucleotide cycle (PNC), which interconverts IMP and AMP to regulate the nucleotide levels in various tissues, and which contributes to glycolysis and ammoniagenesis. Catalyzes the first committed step in the biosynthesis of AMP from IMP. This chain is Adenylosuccinate synthetase isozyme 1 (adss1), found in Xenopus tropicalis (Western clawed frog).